The primary structure comprises 112 residues: Putative RNase TTE0752 (112 aa).

Catalysis depends on residues R74 and H79. The RX(4)HXY motif signature appears at 74-81 (RDKLIHEY). O-di-AMP-tyrosine is present on Y81.

This sequence belongs to the HepT RNase toxin family. In terms of assembly, homodimer, probably forms a complex with cognate antitoxin TTE0751. In terms of processing, modified by cognate antitoxin TTE0751; probably at least 2 successive AMPylation events occur on Tyr-81.

Functionally, probable toxic component of a putative type VII toxin-antitoxin (TA) system, probably an RNase. Probably neutralized by cognate antitoxin TTE0751. Neutralization may be due to AMPylation by TTE0751. In Caldanaerobacter subterraneus subsp. tengcongensis (strain DSM 15242 / JCM 11007 / NBRC 100824 / MB4) (Thermoanaerobacter tengcongensis), this protein is Putative RNase TTE0752.